Consider the following 130-residue polypeptide: Small ribosomal subunit protein uS11 (130 aa).

It belongs to the universal ribosomal protein uS11 family. As to quaternary structure, part of the 30S ribosomal subunit. Interacts with proteins S7 and S18. Binds to IF-3.

In terms of biological role, located on the platform of the 30S subunit, it bridges several disparate RNA helices of the 16S rRNA. Forms part of the Shine-Dalgarno cleft in the 70S ribosome. This Caldanaerobacter subterraneus subsp. tengcongensis (strain DSM 15242 / JCM 11007 / NBRC 100824 / MB4) (Thermoanaerobacter tengcongensis) protein is Small ribosomal subunit protein uS11.